The primary structure comprises 448 residues: Probable sodium-coupled neutral amino acid transporter 6 (448 aa).

2 stretches are compositionally biased toward polar residues: residues 1 to 12 (MQASDSSINTLD) and 26 to 36 (LLANSPQRRSS). The interval 1 to 36 (MQASDSSINTLDGHQVSAGRDESTPLLANSPQRRSS) is disordered. 5 consecutive transmembrane segments (helical) span residues 40–60 (SFGF…ILGL), 69–89 (ILGF…SIHL), 117–137 (LVAC…LFII), 164–184 (LLII…KIGF), and 185–205 (LGYT…VIVI). C212 and C232 are oxidised to a cystine. 2 N-linked (GlcNAc...) asparagine glycosylation sites follow: N218 and N228. 6 consecutive transmembrane segments (helical) span residues 244–264 (AFAL…LPIY), 281–301 (VGIA…YLTF), 321–341 (VLII…VPLI), 365–385 (ILVT…VPDM), 388–408 (VFGV…PGLF), and 425–445 (ACGL…LIIM).

Belongs to the amino acid/polyamine transporter 2 family.

The protein localises to the cell membrane. In terms of biological role, probable sodium-dependent amino acid/proton antiporter, could be a neuronal transporter for glutamate. This is Probable sodium-coupled neutral amino acid transporter 6 (slc38a6) from Xenopus tropicalis (Western clawed frog).